Reading from the N-terminus, the 405-residue chain is Potassium channel subfamily K member 13 (405 aa).

Over 1–19 (MAGRGCSCSPGHLNEDNAR) the chain is Cytoplasmic. A helical membrane pass occupies residues 20-40 (FLLLAGLILLYLLGGAAVFSA). Asn59 and Asn65 each carry an N-linked (GlcNAc...) asparagine glycan. An intramembrane region (pore-forming) is located at residues 95 to 115 (WDFTGAFYFVGTVVTTIGFGM). 3 residues coordinate K(+): Thr110, Ile111, and Gly112. Residues 110–115 (TIGFGM) form a selectivity filter 1 region. A helical transmembrane segment spans residues 125 to 145 (VFLIFYGLIGCASTILFFNLF). Over 146 to 193 (LERLITVIAYVMRTCHHQQLRRRGTVARDNRKAPRKGEADSLAGWKPS) the chain is Cytoplasmic. A helical transmembrane segment spans residues 194-214 (VYYVMLILCLASVAISCGASA). The segment at residues 224 to 244 (YFDSVYFCFVASSTIGFGDLV) is an intramembrane region (pore-forming). K(+) is bound by residues Thr237, Ile238, Gly239, and Phe240. The tract at residues 237 to 242 (TIGFGD) is selectivity filter 2. Residues 263–283 (FFILMGVCCIYSMFNVISILI) form a helical membrane-spanning segment. At 284-405 (KQTVNWILRK…NRLAETSGDR (122 aa)) the chain is on the cytoplasmic side.

Belongs to the two pore domain potassium channel (TC 1.A.1.8) family. In terms of assembly, homodimer. Heterodimer with KCNK12. As to expression, ubiquitous. In brain expression is rather low and restricted to the olfactory bulb and tubercle, to the ventromedial hypothalamic nucleus, lateral septal nucleus dorsal, lateral mammillary nucleus, lateral parabrachial nuclei, reticular nucleus and reunions nuclei.

It localises to the cell membrane. It carries out the reaction K(+)(in) = K(+)(out). Its activity is regulated as follows. The channel currents are activated by arachidonic acid, inhibited by volatile anesthetic halothane, partially inhibited by Ba(2+) ions and only weakly inhibited by extracellular acidification to pH 6. Its function is as follows. K(+) channel that conducts outward rectifying tonic currents potentiated by purinergic signals. Homo- and heterodimerizes to form functional channels with distinct regulatory and gating properties. Contributes most of K(+) currents at the plasma membrane of resting microglia. Maintains a depolarized membrane potential required for proper ramified microglia morphology and phagocytosis, selectively mediating microglial pruning of presynaptic compartments at hippocampal excitatory synapses. Upon local release of ATP caused by neuronal injury or infection, it is potentiated by P2RY12 and P2RX7 receptor signaling and contributes to ATP-triggered K(+) efflux underlying microglial NLRP3 inflammasome assembly and IL1B release. The sequence is that of Potassium channel subfamily K member 13 from Rattus norvegicus (Rat).